The chain runs to 942 residues: Lambda-carrageenase (942 aa).

The N-terminal stretch at 1-25 is a signal peptide; the sequence is MKIKILSAMVASSLLIGCVIPTVKA.

As to quaternary structure, monomer.

It localises to the secreted. It carries out the reaction Endohydrolysis of (1-&gt;4)-beta-linkages in the backbone of lambda-carrageenan, resulting in the tetrasaccharide alpha-D-Galp2,6S2-(1-&gt;3)-beta-D-Galp2S-(1-&gt;4)-alpha-D-Galp2,6S2-(1-&gt;3)-D-Galp2S.. In terms of biological role, hydrolyzes lambda-carrageenan with inversion of anomeric configuration. Does not hydrolyze iota- and kappa-carrageenans, agarose or porphyran. This is Lambda-carrageenase from Pseudoalteromonas carrageenovora (Alteromonas carrageenovora).